The chain runs to 644 residues: 1-deoxy-D-xylulose-5-phosphate synthase (644 aa).

Thiamine diphosphate is bound by residues H72 and 113–115 (GHA). Residue D144 coordinates Mg(2+). Residues 145 to 146 (GA), N174, Y287, and E370 each bind thiamine diphosphate. N174 contributes to the Mg(2+) binding site.

Belongs to the transketolase family. DXPS subfamily. Homodimer. Mg(2+) serves as cofactor. Requires thiamine diphosphate as cofactor.

The enzyme catalyses D-glyceraldehyde 3-phosphate + pyruvate + H(+) = 1-deoxy-D-xylulose 5-phosphate + CO2. The protein operates within metabolic intermediate biosynthesis; 1-deoxy-D-xylulose 5-phosphate biosynthesis; 1-deoxy-D-xylulose 5-phosphate from D-glyceraldehyde 3-phosphate and pyruvate: step 1/1. Functionally, catalyzes the acyloin condensation reaction between C atoms 2 and 3 of pyruvate and glyceraldehyde 3-phosphate to yield 1-deoxy-D-xylulose-5-phosphate (DXP). This Prochlorococcus marinus (strain MIT 9313) protein is 1-deoxy-D-xylulose-5-phosphate synthase.